The chain runs to 437 residues: tRNA-2-methylthio-N(6)-dimethylallyladenosine synthase (437 aa).

The region spanning Met-1–Ala-115 is the MTTase N-terminal domain. Cys-10, Cys-46, Cys-78, Cys-148, Cys-152, and Cys-155 together coordinate [4Fe-4S] cluster. One can recognise a Radical SAM core domain in the interval Lys-134–Glu-367. The region spanning Lys-370–Gly-436 is the TRAM domain.

This sequence belongs to the methylthiotransferase family. MiaB subfamily. In terms of assembly, monomer. The cofactor is [4Fe-4S] cluster.

The protein resides in the cytoplasm. The catalysed reaction is N(6)-dimethylallyladenosine(37) in tRNA + (sulfur carrier)-SH + AH2 + 2 S-adenosyl-L-methionine = 2-methylsulfanyl-N(6)-dimethylallyladenosine(37) in tRNA + (sulfur carrier)-H + 5'-deoxyadenosine + L-methionine + A + S-adenosyl-L-homocysteine + 2 H(+). In terms of biological role, catalyzes the methylthiolation of N6-(dimethylallyl)adenosine (i(6)A), leading to the formation of 2-methylthio-N6-(dimethylallyl)adenosine (ms(2)i(6)A) at position 37 in tRNAs that read codons beginning with uridine. This Helicobacter pylori (strain J99 / ATCC 700824) (Campylobacter pylori J99) protein is tRNA-2-methylthio-N(6)-dimethylallyladenosine synthase.